Consider the following 201-residue polypeptide: Peptidyl-tRNA hydrolase (201 aa).

Tyrosine 15 serves as a coordination point for tRNA. Histidine 20 serves as the catalytic Proton acceptor. Tyrosine 66, asparagine 68, and asparagine 114 together coordinate tRNA.

This sequence belongs to the PTH family. Monomer.

The protein localises to the cytoplasm. The catalysed reaction is an N-acyl-L-alpha-aminoacyl-tRNA + H2O = an N-acyl-L-amino acid + a tRNA + H(+). Its function is as follows. Hydrolyzes ribosome-free peptidyl-tRNAs (with 1 or more amino acids incorporated), which drop off the ribosome during protein synthesis, or as a result of ribosome stalling. Catalyzes the release of premature peptidyl moieties from peptidyl-tRNA molecules trapped in stalled 50S ribosomal subunits, and thus maintains levels of free tRNAs and 50S ribosomes. The sequence is that of Peptidyl-tRNA hydrolase from Burkholderia thailandensis (strain ATCC 700388 / DSM 13276 / CCUG 48851 / CIP 106301 / E264).